A 611-amino-acid polypeptide reads, in one-letter code: E-selectin (611 aa).

The signal sequence occupies residues 1–22; the sequence is MITSQLLPALTLVLLLFKEGGA. Residues 23–140 enclose the C-type lectin domain; it reads WSYNASTEAM…CDKKKLALCY (118 aa). Residues 23-557 lie on the Extracellular side of the membrane; sequence WSYNASTEAM…CEAPTESSIP (535 aa). A glycan (N-linked (GlcNAc...) asparagine) is linked at Asn26. 19 cysteine pairs are disulfide-bonded: Cys41-Cys139, Cys112-Cys131, Cys144-Cys155, Cys149-Cys164, Cys166-Cys175, Cys181-Cys225, Cys194-Cys207, Cys211-Cys238, Cys243-Cys287, Cys256-Cys269, Cys273-Cys300, Cys305-Cys350, Cys336-Cys363, Cys368-Cys413, Cys399-Cys426, Cys431-Cys476, Cys462-Cys489, Cys494-Cys535, and Cys521-Cys548. Ca(2+)-binding residues include Glu102, Asn104, and Glu110. Residues 102 to 110, 114 to 119, and 127 to 129 each bind a carbohydrate; these read EPNNKQNDE, EIYIKR, and NDE. Residues Asn127 and Asp128 each coordinate Ca(2+). The EGF-like domain occupies 141-176; the sequence is TAACTPTSCSGHGECVETVNNYTCKCHPGFRGLRCE. The N-linked (GlcNAc...) asparagine glycan is linked to Asn161. Sushi domains are found at residues 179–240 and 241–302; these read VTCQ…ACNV and VECS…TCKA. An N-linked (GlcNAc...) asparagine glycan is attached at Asn204. Asn266 is a glycosylation site (N-linked (GlcNAc...) asparagine). 2 N-linked (GlcNAc...) asparagine glycosylation sites follow: Asn313 and Asn333. Sushi domains are found at residues 316 to 365, 367 to 428, 430 to 491, and 492 to 550; these read VSCS…VCKA, QCKA…TCEA, KCDA…SCQV, and VQCF…TCEA. Asn528 carries N-linked (GlcNAc...) asparagine glycosylation. A helical transmembrane segment spans residues 558–579; sequence LAVGLTAGGTSLLTVASFLLWL. The Cytoplasmic segment spans residues 580–611; that stretch reads LKRLRKRAKKFVPASSCQSLQSDGSYHMPCSI.

It belongs to the selectin/LECAM family. Interacts with SELPLG/PSGL1 and PODXL2 through the sialyl Lewis X epitope. SELPLG sulfation appears not to be required for this interaction.

Its subcellular location is the cell membrane. Functionally, cell-surface glycoprotein having a role in immunoadhesion. Mediates in the adhesion of blood neutrophils in cytokine-activated endothelium through interaction with SELPLG/PSGL1. May have a role in capillary morphogenesis. The protein is E-selectin (SELE) of Canis lupus familiaris (Dog).